Here is a 323-residue protein sequence, read N- to C-terminus: COP9 signalosome complex subunit 6 (323 aa).

In terms of domain architecture, MPN spans 37-170; sequence VALHPLVILN…VSVFESVIDI (134 aa).

Belongs to the peptidase M67A family. CSN6 subfamily. Component of the CSN complex, composed of COPS1/GPS1, COPS2, COPS3, COPS4, COPS5, COPS6, COPS7 (COPS7A or COPS7B), COPS8 and COPS9. In the complex, it probably interacts directly with COPS2, COPS4, COPS5, COPS7 (COPS7A or COPS7B) and COPS9. Interacts with the translation initiation factor EIF3S6. Interacts weakly with RBX1. Directly interacts with COP1 and 14-3-3 protein sigma/SFN. Interacts with ERCC6.

The protein resides in the cytoplasm. It localises to the nucleus. Component of the COP9 signalosome complex (CSN), a complex involved in various cellular and developmental processes. The CSN complex is an essential regulator of the ubiquitin (Ubl) conjugation pathway by mediating the deneddylation of the cullin subunits of SCF-type E3 ligase complexes, leading to decrease the Ubl ligase activity of SCF-type complexes such as SCF, CSA or DDB2. The complex is also involved in phosphorylation of p53/TP53, c-jun/JUN, IkappaBalpha/NFKBIA, ITPK1 and IRF8, possibly via its association with CK2 and PKD kinases. CSN-dependent phosphorylation of TP53 and JUN promotes and protects degradation by the Ubl system, respectively. Has some glucocorticoid receptor-responsive activity. Stabilizes COP1 through reducing COP1 auto-ubiquitination and decelerating COP1 turnover rate, hence regulates the ubiquitination of COP1 targets, including SFN. This chain is COP9 signalosome complex subunit 6 (COPS6), found in Sus scrofa (Pig).